Reading from the N-terminus, the 452-residue chain is MDPNTEGTTTKKYTSQRRTIDISASYDRLYFLKKHGQENSSYIEAETSYNAHILPPDAYGFHGHAINTATKFTHLSSNKVKHVIPALTWTPEGRRLVVATYNGEFSLWSGSSFNFESIMQAHDSAVTVMTYSHTGDWMVSGSADGELKIWQPNFNMVKVMDQAHMECVREISFSPTDQKFVSCSDDNVLKIWNFSNGQQERVLSGHHWDVKSCDWHPKMGLIVSGSKDNLIKFWDPRSGSCVSTMLGFKHTIISTKFQPKQGNLLSVISKDKTCKVYDIRQQAKELFSVRDDVDYMTLQWHPIDETVFTVGCYDGSIKHFDLSQENQPNKPTHNIPYAHEKCVTSLAYSPIGHIMASASKDRTIRFWTRSRAVDPNAFDDPTYNNEKVNAWYFGINNNINAVRNKTEHGVALPPSEDSNNNENGDGSRSVEPERPSVSTLPGLGSGLPGLSF.

WD repeat units follow at residues 79–118 (KVKH…FESI), 121–160 (AHDS…VKVM), 163–202 (AHME…QERV), 205–244 (GHHW…CVST), 247–287 (GFKH…KELF), 290–330 (RDDV…QPNK), and 338–377 (AHEK…DPNA). Residues 409 to 452 (GVALPPSEDSNNNENGDGSRSVEPERPSVSTLPGLGSGLPGLSF) are disordered. The segment covering 416–426 (EDSNNNENGDG) has biased composition (polar residues). Residues 443–452 (LGSGLPGLSF) show a composition bias toward gly residues.

Its subcellular location is the nucleus. Its function is as follows. Required for 3'-end cleavage and polyadenylation of pre-mRNAs. Also involved in chromosome segregation where it has a role in chromosome attachment to the mitotic spindle. The protein is Polyadenylation factor subunit 2 (PFS2) of Kluyveromyces lactis (strain ATCC 8585 / CBS 2359 / DSM 70799 / NBRC 1267 / NRRL Y-1140 / WM37) (Yeast).